Reading from the N-terminus, the 405-residue chain is Probable tRNA sulfurtransferase (405 aa).

The THUMP domain occupies 60–165; sequence VPVAESLKQI…EEAAYLSYEN (106 aa). ATP is bound by residues 183 to 184, 208 to 209, arginine 265, glycine 287, and glutamine 296; these read ML and HF.

It belongs to the ThiI family.

It localises to the cytoplasm. The enzyme catalyses [ThiI sulfur-carrier protein]-S-sulfanyl-L-cysteine + a uridine in tRNA + 2 reduced [2Fe-2S]-[ferredoxin] + ATP + H(+) = [ThiI sulfur-carrier protein]-L-cysteine + a 4-thiouridine in tRNA + 2 oxidized [2Fe-2S]-[ferredoxin] + AMP + diphosphate. It carries out the reaction [ThiS sulfur-carrier protein]-C-terminal Gly-Gly-AMP + S-sulfanyl-L-cysteinyl-[cysteine desulfurase] + AH2 = [ThiS sulfur-carrier protein]-C-terminal-Gly-aminoethanethioate + L-cysteinyl-[cysteine desulfurase] + A + AMP + 2 H(+). It participates in cofactor biosynthesis; thiamine diphosphate biosynthesis. Catalyzes the ATP-dependent transfer of a sulfur to tRNA to produce 4-thiouridine in position 8 of tRNAs, which functions as a near-UV photosensor. Also catalyzes the transfer of sulfur to the sulfur carrier protein ThiS, forming ThiS-thiocarboxylate. This is a step in the synthesis of thiazole, in the thiamine biosynthesis pathway. The sulfur is donated as persulfide by IscS. In Streptococcus mutans serotype c (strain ATCC 700610 / UA159), this protein is Probable tRNA sulfurtransferase.